The sequence spans 413 residues: Arginine biosynthesis bifunctional protein ArgJ (413 aa).

The substrate site is built by Thr158, Lys184, Thr195, Glu285, Asn408, and Ser413. The Nucleophile role is filled by Thr195.

It belongs to the ArgJ family. Heterotetramer of two alpha and two beta chains.

The protein localises to the cytoplasm. The enzyme catalyses N(2)-acetyl-L-ornithine + L-glutamate = N-acetyl-L-glutamate + L-ornithine. It catalyses the reaction L-glutamate + acetyl-CoA = N-acetyl-L-glutamate + CoA + H(+). The protein operates within amino-acid biosynthesis; L-arginine biosynthesis; L-ornithine and N-acetyl-L-glutamate from L-glutamate and N(2)-acetyl-L-ornithine (cyclic): step 1/1. It participates in amino-acid biosynthesis; L-arginine biosynthesis; N(2)-acetyl-L-ornithine from L-glutamate: step 1/4. Functionally, catalyzes two activities which are involved in the cyclic version of arginine biosynthesis: the synthesis of N-acetylglutamate from glutamate and acetyl-CoA as the acetyl donor, and of ornithine by transacetylation between N(2)-acetylornithine and glutamate. This is Arginine biosynthesis bifunctional protein ArgJ from Mesorhizobium japonicum (strain LMG 29417 / CECT 9101 / MAFF 303099) (Mesorhizobium loti (strain MAFF 303099)).